Reading from the N-terminus, the 143-residue chain is Transcriptional regulator MraZ (143 aa).

2 consecutive SpoVT-AbrB domains span residues 5-47 (TYTP…PRAA) and 76-119 (TDEQ…DAQA).

Belongs to the MraZ family. In terms of assembly, forms oligomers.

The protein localises to the cytoplasm. It is found in the nucleoid. In Mycobacterium bovis (strain ATCC BAA-935 / AF2122/97), this protein is Transcriptional regulator MraZ.